Here is a 338-residue protein sequence, read N- to C-terminus: Ketol-acid reductoisomerase (NADP(+)) (338 aa).

The KARI N-terminal Rossmann domain maps to 1 to 181; that stretch reads MKVFYDKDCD…GGGRTGIIET (181 aa). NADP(+)-binding positions include 24 to 27, Arg47, Ser50, Thr52, and 82 to 85; these read YGSQ and DEFQ. Residue His107 is part of the active site. Gly133 is a binding site for NADP(+). The region spanning 182 to 327 is the KARI C-terminal knotted domain; the sequence is TFKDETETDL…EQLRSMMPWI (146 aa). Residues Asp190, Glu194, Glu226, and Glu230 each coordinate Mg(2+). Ser251 contacts substrate.

It belongs to the ketol-acid reductoisomerase family. Mg(2+) is required as a cofactor.

It carries out the reaction (2R)-2,3-dihydroxy-3-methylbutanoate + NADP(+) = (2S)-2-acetolactate + NADPH + H(+). The catalysed reaction is (2R,3R)-2,3-dihydroxy-3-methylpentanoate + NADP(+) = (S)-2-ethyl-2-hydroxy-3-oxobutanoate + NADPH + H(+). The protein operates within amino-acid biosynthesis; L-isoleucine biosynthesis; L-isoleucine from 2-oxobutanoate: step 2/4. It participates in amino-acid biosynthesis; L-valine biosynthesis; L-valine from pyruvate: step 2/4. Its function is as follows. Involved in the biosynthesis of branched-chain amino acids (BCAA). Catalyzes an alkyl-migration followed by a ketol-acid reduction of (S)-2-acetolactate (S2AL) to yield (R)-2,3-dihydroxy-isovalerate. In the isomerase reaction, S2AL is rearranged via a Mg-dependent methyl migration to produce 3-hydroxy-3-methyl-2-ketobutyrate (HMKB). In the reductase reaction, this 2-ketoacid undergoes a metal-dependent reduction by NADPH to yield (R)-2,3-dihydroxy-isovalerate. The polypeptide is Ketol-acid reductoisomerase (NADP(+)) (Pseudomonas fluorescens (strain ATCC BAA-477 / NRRL B-23932 / Pf-5)).